Here is a 323-residue protein sequence, read N- to C-terminus: Serine/threonine-protein phosphatase PP1-gamma catalytic subunit B (323 aa).

The Mn(2+) site is built by Asp-64, His-66, Asp-92, and Asn-124. Catalysis depends on His-125, which acts as the Proton donor. Mn(2+) contacts are provided by His-173 and His-248. Residues 301–323 are disordered; that stretch reads KKKPNASRPVTPPRGIITKQAKK.

The protein belongs to the PPP phosphatase family. PP-1 subfamily. As to quaternary structure, PP1 comprises a catalytic subunit, ppp1c1, ppp1cb or ppp1cc, which is folded into its native form by inhibitor 2 and glycogen synthetase kinase 3, and then is complexed to one or several targeting or regulatory subunits. Requires Mn(2+) as cofactor.

It is found in the cytoplasm. The protein resides in the nucleus. The protein localises to the cleavage furrow. Its subcellular location is the nucleolus. It localises to the nucleoplasm. It is found in the chromosome. The protein resides in the centromere. The protein localises to the kinetochore. Its subcellular location is the nucleus speckle. It localises to the midbody. It is found in the mitochondrion. It carries out the reaction O-phospho-L-seryl-[protein] + H2O = L-seryl-[protein] + phosphate. It catalyses the reaction O-phospho-L-threonyl-[protein] + H2O = L-threonyl-[protein] + phosphate. Functionally, protein phosphatase that associates with over 200 regulatory proteins to form highly specific holoenzymes which dephosphorylate hundreds of biological targets. Protein phosphatase 1 (PP1) is essential for cell division, and participates in the regulation of glycogen metabolism, muscle contractility and protein synthesis. Promotes nuclear envelope reassembly by targeting nuclear membrane vesicles to chromatin at the end of mitosis. Acts by dephosphorylating membrane proteins such as lamin B receptor (lbr) to regulate the binding of membrane proteins to chromatin. The protein is Serine/threonine-protein phosphatase PP1-gamma catalytic subunit B (ppp1cc-b) of Xenopus laevis (African clawed frog).